Reading from the N-terminus, the 260-residue chain is Ribosomal RNA small subunit methyltransferase J (260 aa).

S-adenosyl-L-methionine contacts are provided by residues 125-126 (ER) and Asp-179.

The protein belongs to the methyltransferase superfamily. RsmJ family.

The protein localises to the cytoplasm. The enzyme catalyses guanosine(1516) in 16S rRNA + S-adenosyl-L-methionine = N(2)-methylguanosine(1516) in 16S rRNA + S-adenosyl-L-homocysteine + H(+). Its function is as follows. Specifically methylates the guanosine in position 1516 of 16S rRNA. This chain is Ribosomal RNA small subunit methyltransferase J, found in Pseudomonas entomophila (strain L48).